A 613-amino-acid polypeptide reads, in one-letter code: 4-hydroxy-3-methylbut-2-en-1-yl diphosphate synthase (flavodoxin) (613 aa).

4 residues coordinate [4Fe-4S] cluster: Cys521, Cys524, Cys555, and Glu562.

This sequence belongs to the IspG family. Requires [4Fe-4S] cluster as cofactor.

The enzyme catalyses (2E)-4-hydroxy-3-methylbut-2-enyl diphosphate + oxidized [flavodoxin] + H2O + 2 H(+) = 2-C-methyl-D-erythritol 2,4-cyclic diphosphate + reduced [flavodoxin]. It participates in isoprenoid biosynthesis; isopentenyl diphosphate biosynthesis via DXP pathway; isopentenyl diphosphate from 1-deoxy-D-xylulose 5-phosphate: step 5/6. Its function is as follows. Converts 2C-methyl-D-erythritol 2,4-cyclodiphosphate (ME-2,4cPP) into 1-hydroxy-2-methyl-2-(E)-butenyl 4-diphosphate. In Bacteroides thetaiotaomicron (strain ATCC 29148 / DSM 2079 / JCM 5827 / CCUG 10774 / NCTC 10582 / VPI-5482 / E50), this protein is 4-hydroxy-3-methylbut-2-en-1-yl diphosphate synthase (flavodoxin).